A 705-amino-acid chain; its full sequence is Frizzled-4 (705 aa).

Residues 1–22 form the signal peptide; that stretch reads MKPTCILCLLVVILLHPRISKS. Low complexity predominate over residues 21–37; it reads KSSTSGNPSASSSSSSP. The disordered stretch occupies residues 21-40; sequence KSSTSGNPSASSSSSSPPEI. At 23-233 the chain is on the extracellular side; that stretch reads STSGNPSASS…FTPAEKHLAE (211 aa). One can recognise an FZ domain in the interval 41-163; that stretch reads PAFRQCETIR…NNHETMCMEG (123 aa). 5 cysteine pairs are disulfide-bonded: cysteine 46–cysteine 107, cysteine 54–cysteine 100, cysteine 91–cysteine 130, cysteine 119–cysteine 160, and cysteine 123–cysteine 147. Asparagine 60 carries an N-linked (GlcNAc...) asparagine glycan. The chain crosses the membrane as a helical span at residues 234-254; the sequence is IWVSTWAYAALGLALVATVCL. At 255–270 the chain is on the cytoplasmic side; that stretch reads LASDGSRLASAKWSRL. The chain crosses the membrane as a helical span at residues 271-291; the sequence is LSPLIWCHNMVTLGWAVRFMV. At 292-322 the chain is on the extracellular side; sequence GRTGTACGTDPQAPNESLLTVDGLSNASCAS. 2 N-linked (GlcNAc...) asparagine glycosylation sites follow: asparagine 306 and asparagine 317. A helical membrane pass occupies residues 323–343; that stretch reads VFLMRYYFGMAACAWWAVLCL. Over 344-386 the chain is Cytoplasmic; sequence GWHRDIRRHSPDSKGHVVIPSNFGGSPAKRNSAKTAQQDLTQN. A helical transmembrane segment spans residues 387–407; that stretch reads NFVCFVAWGLPAFQTSAVIVA. The Extracellular segment spans residues 408-430; that stretch reads RFVDADELLGACFVGNQSDKALQ. N-linked (GlcNAc...) asparagine glycosylation occurs at asparagine 423. The chain crosses the membrane as a helical span at residues 431–451; the sequence is ILVATPVFCYWIFGSMNLISG. Residues 452-483 are Cytoplasmic-facing; sequence YLVHCRTKEILRNSNALSVQQQLQQLSAHSSS. Residues 484-504 traverse the membrane as a helical segment; it reads GIGIFLFIYGLACAMLLLAVI. Residues 505 to 529 lie on the Extracellular side of the membrane; that stretch reads YEFANIDVWLGSGDTNTPLWPFLLR. A helical transmembrane segment spans residues 530 to 550; it reads AFMELMLGICCFAWVLGPSIS. Residues 551–705 are Cytoplasmic-facing; it reads TLYKRQVSNG…LQQYGNETLL (155 aa). The disordered stretch occupies residues 635-681; it reads RSVHHQQRHSPHHHHHQQQQHHQFHPHHNHQHHSTSSHRLYYPPGSY. Over residues 636-670 the composition is skewed to basic residues; it reads SVHHQQRHSPHHHHHQQQQHHQFHPHHNHQHHSTS. A PDZ-binding motif is present at residues 703 to 705; sequence TLL.

The protein belongs to the G-protein coupled receptor Fz/Smo family.

The protein localises to the membrane. In terms of biological role, receptor for Wnt proteins. Most of frizzled receptors are coupled to the beta-catenin canonical signaling pathway, which leads to the activation of disheveled proteins, inhibition of GSK-3 kinase, nuclear accumulation of beta-catenin and activation of Wnt target genes. A second signaling pathway involving PKC and calcium fluxes has been seen for some family members, but it is not yet clear if it represents a distinct pathway or if it can be integrated in the canonical pathway, as PKC seems to be required for Wnt-mediated inactivation of GSK-3 kinase. Both pathways seem to involve interactions with G-proteins. May be involved in transduction and intercellular transmission of polarity information during tissue morphogenesis and/or in differentiated tissues. Required to coordinate the cytoskeletons of epidermal cells to produce a parallel array of cuticular hairs and bristles. The protein is Frizzled-4 (fz4) of Drosophila melanogaster (Fruit fly).